Consider the following 102-residue polypeptide: Secreted RxLR effector protein 61 (102 aa).

The first 22 residues, 1-22 (MAFQLRIVQHLLHITFLRLPLA), serve as a signal peptide directing secretion. A RxLR-dEER motif is present at residues 51–60 (RRLRQLNEHR).

This sequence belongs to the RxLR effector family.

It is found in the secreted. It localises to the host chloroplast envelope. Its subcellular location is the host cytoplasm. The protein localises to the host nucleus. Functionally, effector that partially suppresses the tobacco programmed cell death induced by cell death-inducing proteins. This is Secreted RxLR effector protein 61 from Plasmopara viticola (Downy mildew of grapevine).